A 485-amino-acid chain; its full sequence is Aspartyl/glutamyl-tRNA(Asn/Gln) amidotransferase subunit B (485 aa).

It belongs to the GatB/GatE family. GatB subfamily. As to quaternary structure, heterotrimer of A, B and C subunits.

The enzyme catalyses L-glutamyl-tRNA(Gln) + L-glutamine + ATP + H2O = L-glutaminyl-tRNA(Gln) + L-glutamate + ADP + phosphate + H(+). The catalysed reaction is L-aspartyl-tRNA(Asn) + L-glutamine + ATP + H2O = L-asparaginyl-tRNA(Asn) + L-glutamate + ADP + phosphate + 2 H(+). In terms of biological role, allows the formation of correctly charged Asn-tRNA(Asn) or Gln-tRNA(Gln) through the transamidation of misacylated Asp-tRNA(Asn) or Glu-tRNA(Gln) in organisms which lack either or both of asparaginyl-tRNA or glutaminyl-tRNA synthetases. The reaction takes place in the presence of glutamine and ATP through an activated phospho-Asp-tRNA(Asn) or phospho-Glu-tRNA(Gln). The polypeptide is Aspartyl/glutamyl-tRNA(Asn/Gln) amidotransferase subunit B (Borrelia duttonii (strain Ly)).